The sequence spans 405 residues: Tryptophan synthase beta chain (405 aa).

Residue K98 is modified to N6-(pyridoxal phosphate)lysine.

The protein belongs to the TrpB family. As to quaternary structure, tetramer of two alpha and two beta chains. The cofactor is pyridoxal 5'-phosphate.

The catalysed reaction is (1S,2R)-1-C-(indol-3-yl)glycerol 3-phosphate + L-serine = D-glyceraldehyde 3-phosphate + L-tryptophan + H2O. The protein operates within amino-acid biosynthesis; L-tryptophan biosynthesis; L-tryptophan from chorismate: step 5/5. Functionally, the beta subunit is responsible for the synthesis of L-tryptophan from indole and L-serine. In Stenotrophomonas maltophilia (strain K279a), this protein is Tryptophan synthase beta chain.